The sequence spans 586 residues: Dual specificity tyrosine-phosphorylation-regulated kinase 3 (586 aa).

Over residues 1-13 (MGGAARDRGRKDA) the composition is skewed to basic and acidic residues. The interval 1 to 187 (MGGAARDRGR…QGVIGGPNNG (187 aa)) is disordered. The region spanning 208–521 (YEVLKIIGKG…PAQALRHPWI (314 aa)) is the Protein kinase domain. ATP is bound by residues 214-222 (IGKGSFGQV), K237, and 287-290 (FELL). The Proton acceptor role is filled by D334. Position 368 is a phosphotyrosine (Y368). The short motif at 467-480 (RSRRGKKRGPPGSK) is the Nuclear localization signal element.

It belongs to the protein kinase superfamily. CMGC Ser/Thr protein kinase family. MNB/DYRK subfamily. In terms of assembly, interacts with SIRT1. The cofactor is Mg(2+). In terms of processing, ubiquitinated at anaphase by the anaphase-promoting complex (APC/C), leading to its degradation by the proteasome. Post-translationally, protein kinase activity is activated following autophosphorylation at Tyr-368.

It localises to the nucleus. It is found in the cytoplasm. Its subcellular location is the nucleus speckle. The protein localises to the cytoplasmic granule. The protein resides in the cytoskeleton. It localises to the microtubule organizing center. It is found in the centrosome. It carries out the reaction L-seryl-[protein] + ATP = O-phospho-L-seryl-[protein] + ADP + H(+). The enzyme catalyses L-threonyl-[protein] + ATP = O-phospho-L-threonyl-[protein] + ADP + H(+). It catalyses the reaction L-tyrosyl-[protein] + ATP = O-phospho-L-tyrosyl-[protein] + ADP + H(+). Protein kinase activity is activated following autophosphorylation at Tyr-368. Its function is as follows. Dual-specificity protein kinase that promotes disassembly of several types of membraneless organelles during mitosis, such as stress granules, nuclear speckles and pericentriolar material. Dual-specificity tyrosine-regulated kinases (DYRKs) autophosphorylate a critical tyrosine residue in their activation loop and phosphorylate their substrate on serine and threonine residues. Acts as a central dissolvase of membraneless organelles during the G2-to-M transition, after the nuclear-envelope breakdown: acts by mediating phosphorylation of multiple serine and threonine residues in unstructured domains of proteins, such as SRRM1 and PCM1. Does not mediate disassembly of all membraneless organelles: disassembly of P-body and nucleolus is not regulated by DYRK3. Dissolution of membraneless organelles at the onset of mitosis is also required to release mitotic regulators, such as ZNF207, from liquid-unmixed organelles where they are sequestered and keep them dissolved during mitosis. Regulates mTORC1 by mediating the dissolution of stress granules: during stressful conditions, DYRK3 partitions from the cytosol to the stress granule, together with mTORC1 components, which prevents mTORC1 signaling. When stress signals are gone, the kinase activity of DYRK3 is required for the dissolution of stress granule and mTORC1 relocation to the cytosol: acts by mediating the phosphorylation of the mTORC1 inhibitor AKT1S1, allowing full reactivation of mTORC1 signaling. Also acts as a negative regulator of EPO-dependent erythropoiesis: may place an upper limit on red cell production during stress erythropoiesis. Inhibits cell death due to cytokine withdrawal in hematopoietic progenitor cells. Promotes cell survival upon genotoxic stress through phosphorylation of SIRT1: this in turn inhibits p53/TP53 activity and apoptosis. This Mus musculus (Mouse) protein is Dual specificity tyrosine-phosphorylation-regulated kinase 3.